Here is a 918-residue protein sequence, read N- to C-terminus: Protein SEY1 homolog (918 aa).

The Cytoplasmic portion of the chain corresponds to 1–701 (MESSNHLPNK…AGTSVSSWRN (701 aa)). Residues 46-280 (GFKFNVVTIL…VPSDGFFVYS (235 aa)) enclose the GB1/RHD3-type G domain. GTP is bound at residue 56-63 (GSQSSGKS). Positions 554–626 (SLVLLLKATQ…DALTLLQVLK (73 aa)) form a coiled coil. A helical transmembrane segment spans residues 702-722 (IPPVFWLVLLVLGWNELRAAF). Topologically, residues 723–725 (RVL) are lumenal. A helical membrane pass occupies residues 726 to 746 (LKFYILIPLLIVSYFTFSYSA). Residues 747-918 (NKLLGPKANE…CGKAVHLAQW (172 aa)) are Cytoplasmic-facing.

The protein belongs to the TRAFAC class dynamin-like GTPase superfamily. GB1/RHD3 GTPase family. RHD3 subfamily.

Its subcellular location is the endoplasmic reticulum membrane. Its function is as follows. Probable GTP-binding protein that may be involved in cell development. This Theileria annulata protein is Protein SEY1 homolog.